The chain runs to 572 residues: Sorting nexin 2B (572 aa).

2 disordered regions span residues 1 to 97 (MMGS…SSYL) and 114 to 136 (SEIN…SPSS). Positions 9 to 30 (ESHLHSSKEEMEKLFLREDGDP) are enriched in basic and acidic residues. Residues 32 to 53 (TKSNVNGDKSNSNYRSAMSTLF) show a composition bias toward polar residues. A compositionally biased stretch (low complexity) spans 124-136 (SQSSDSLSRSPSS). A Phosphoserine modification is found at Ser133. The PX domain maps to 147-266 (SNPQKEQEAT…KVFLQAQGKL (120 aa)). Residues Arg190, Lys216, and Arg233 each coordinate a 1,2-diacyl-sn-glycero-3-phospho-(1D-myo-inositol-3-phosphate). Positions 318 to 572 (LRQSVSNDWG…ETRQYDRESS (255 aa)) constitute a BAR domain.

The protein belongs to the sorting nexin family. Homodimer. Heterodimer with SNX1 or SNX2B. Component of the retromer complex which consists of VPS29 (MAG1), VPS26 (VPS26A or VPS26B), VPS35 (VPS35A or VPS35B or VPS35C), VPS5/17 (SNX1 or SNX2A or SNX2B). As to expression, ubiquitously expressed.

The protein localises to the cytoplasm. Its subcellular location is the endosome membrane. It localises to the prevacuolar compartment membrane. The protein resides in the golgi apparatus. It is found in the trans-Golgi network membrane. Plays a role in vesicular protein sorting. Acts at the crossroads between the secretory and endocytic pathways. Is involved in the endosome to vacuole protein transport and, as component of the membrane-associated retromer complex, is also involved in endosome-to-Golgi retrograde transport. The sequence is that of Sorting nexin 2B (SNX2B) from Arabidopsis thaliana (Mouse-ear cress).